Consider the following 420-residue polypeptide: 3-phosphoshikimate 1-carboxyvinyltransferase (420 aa).

3-phosphoshikimate-binding residues include lysine 20, serine 21, and arginine 25. Position 20 (lysine 20) interacts with phosphoenolpyruvate. Arginine 119 is a phosphoenolpyruvate binding site. 3-phosphoshikimate is bound by residues serine 161, serine 162, glutamine 163, serine 189, aspartate 303, glutamine 326, and lysine 330. Glutamine 163 serves as a coordination point for phosphoenolpyruvate. Catalysis depends on aspartate 303, which acts as the Proton acceptor. Residues arginine 334, arginine 375, and lysine 400 each contribute to the phosphoenolpyruvate site.

This sequence belongs to the EPSP synthase family. Monomer.

The protein localises to the cytoplasm. The enzyme catalyses 3-phosphoshikimate + phosphoenolpyruvate = 5-O-(1-carboxyvinyl)-3-phosphoshikimate + phosphate. Its pathway is metabolic intermediate biosynthesis; chorismate biosynthesis; chorismate from D-erythrose 4-phosphate and phosphoenolpyruvate: step 6/7. Functionally, catalyzes the transfer of the enolpyruvyl moiety of phosphoenolpyruvate (PEP) to the 5-hydroxyl of shikimate-3-phosphate (S3P) to produce enolpyruvyl shikimate-3-phosphate and inorganic phosphate. The protein is 3-phosphoshikimate 1-carboxyvinyltransferase of Dehalococcoides mccartyi (strain ATCC BAA-2100 / JCM 16839 / KCTC 5957 / BAV1).